The chain runs to 196 residues: ATP-dependent Clp protease proteolytic subunit 1 (196 aa).

The active-site Nucleophile is the S96. Residue H121 is part of the active site.

This sequence belongs to the peptidase S14 family. Fourteen ClpP subunits assemble into 2 heptameric rings which stack back to back to give a disk-like structure with a central cavity, resembling the structure of eukaryotic proteasomes.

The protein resides in the cytoplasm. The enzyme catalyses Hydrolysis of proteins to small peptides in the presence of ATP and magnesium. alpha-casein is the usual test substrate. In the absence of ATP, only oligopeptides shorter than five residues are hydrolyzed (such as succinyl-Leu-Tyr-|-NHMec, and Leu-Tyr-Leu-|-Tyr-Trp, in which cleavage of the -Tyr-|-Leu- and -Tyr-|-Trp bonds also occurs).. Functionally, cleaves peptides in various proteins in a process that requires ATP hydrolysis. Has a chymotrypsin-like activity. Plays a major role in the degradation of misfolded proteins. This chain is ATP-dependent Clp protease proteolytic subunit 1, found in Prochlorococcus marinus (strain NATL2A).